We begin with the raw amino-acid sequence, 117 residues long: Large ribosomal subunit protein bL20 (117 aa).

Belongs to the bacterial ribosomal protein bL20 family.

Its function is as follows. Binds directly to 23S ribosomal RNA and is necessary for the in vitro assembly process of the 50S ribosomal subunit. It is not involved in the protein synthesizing functions of that subunit. This is Large ribosomal subunit protein bL20 from Geobacter sulfurreducens (strain ATCC 51573 / DSM 12127 / PCA).